The primary structure comprises 259 residues: NADPH-dependent reductase BacG (259 aa).

Residues 12-15 (SQGI), 34-36 (SRN), 62-63 (DM), Ile90, Lys113, and 185-191 (GFIATDR) contribute to the NADP(+) site.

Belongs to the short-chain dehydrogenases/reductases (SDR) family. Homodimer.

The protein localises to the cytoplasm. The protein operates within antibiotic biosynthesis; bacilysin biosynthesis. Its function is as follows. Along with the bacABCDEF operon, BacG is involved in the biosynthesis of the nonribosomally synthesized dipeptide antibiotic bacilysin, composed of L-alanine and L-anticapsin. Bacilysin is an irreversible inactivator of the glutaminase domain of glucosamine synthetase. BacG catalyzes the stereoselective reduction of exocyclic-delta(3),delta(5)-dihydro-hydroxyphenylpyruvate (ex-H2HPP), adding a pro-S hydride equivalent to C4 position to yield tetrahydro-hydroxyphenylpyruvate (H4HPP). Although the 3Z,7R-ex-H2HPP isomer is kinetically disfavored by BacB and produced in a smaller quantity than 3E,7R-ex-H2HPP, it is the preferred substrate for the conjugate reduction reaction of BacG. The chain is NADPH-dependent reductase BacG from Bacillus subtilis (strain 168).